We begin with the raw amino-acid sequence, 402 residues long: DNA replication and repair protein RecF (402 aa).

Residue 30–37 (GYNGIGKT) participates in ATP binding.

Belongs to the RecF family.

It localises to the cytoplasm. Its function is as follows. The RecF protein is involved in DNA metabolism; it is required for DNA replication and normal SOS inducibility. RecF binds preferentially to single-stranded, linear DNA. It also seems to bind ATP. In Pseudarthrobacter chlorophenolicus (strain ATCC 700700 / DSM 12829 / CIP 107037 / JCM 12360 / KCTC 9906 / NCIMB 13794 / A6) (Arthrobacter chlorophenolicus), this protein is DNA replication and repair protein RecF.